The following is a 443-amino-acid chain: Thymidine phosphorylase (443 aa).

The protein belongs to the thymidine/pyrimidine-nucleoside phosphorylase family. In terms of assembly, homodimer.

The enzyme catalyses thymidine + phosphate = 2-deoxy-alpha-D-ribose 1-phosphate + thymine. It functions in the pathway pyrimidine metabolism; dTMP biosynthesis via salvage pathway; dTMP from thymine: step 1/2. Its function is as follows. The enzymes which catalyze the reversible phosphorolysis of pyrimidine nucleosides are involved in the degradation of these compounds and in their utilization as carbon and energy sources, or in the rescue of pyrimidine bases for nucleotide synthesis. The protein is Thymidine phosphorylase of Photobacterium profundum (strain SS9).